We begin with the raw amino-acid sequence, 178 residues long: Inorganic pyrophosphatase (178 aa).

Residues Lys30, Arg44, and Tyr56 each contribute to the substrate site. Residues Asp66, Asp71, and Asp103 each coordinate Mg(2+). Tyr142 contributes to the substrate binding site.

It belongs to the PPase family. In terms of assembly, homohexamer. Mg(2+) serves as cofactor.

It is found in the cytoplasm. The catalysed reaction is diphosphate + H2O = 2 phosphate + H(+). Its function is as follows. Catalyzes the hydrolysis of inorganic pyrophosphate (PPi) forming two phosphate ions. The sequence is that of Inorganic pyrophosphatase from Xylella fastidiosa (strain 9a5c).